The primary structure comprises 274 residues: Lectizyme (274 aa).

An N-terminal signal peptide occupies residues 1–16 (MKFFAVFALCVASVSA). The Peptidase S1 domain occupies 32 to 268 (IINGHEAEKG…FDKWIEDSIE (237 aa)). Cys57 and Cys73 are oxidised to a cystine. Active-site charge relay system residues include His72 and Asp119. Disulfide bonds link Cys188–Cys204 and Cys215–Cys244. The Charge relay system role is filled by Ser219.

It belongs to the peptidase S1 family. Expressed in the midgut.

The protein localises to the secreted. In terms of biological role, protein with lectin and protease activity involved in the establishment of trypanosome infections in tsetse flies. Binds D-glucosamine and agglutinates bloodstream-form trypanosomes and rabbit red blood cells. Capable of inducing transformation of bloodstream-form trypanosomes into procyclic (midgut) forms in vitro. This is Lectizyme (Gpl) from Glossina austeni (Savannah tsetse fly).